Consider the following 77-residue polypeptide: MNLGFGILIFVLGLVIGLVIGFFVARNSMKSYLAKNPPISEEMMKSMMMSMGQKPSQKKLNQMMAQMKQQSEQSQKK.

Residues 5–25 (FGILIFVLGLVIGLVIGFFVA) traverse the membrane as a helical segment. The disordered stretch occupies residues 50 to 77 (SMGQKPSQKKLNQMMAQMKQQSEQSQKK).

This sequence belongs to the UPF0154 family.

Its subcellular location is the cell membrane. The chain is UPF0154 protein LCK_00994 from Leuconostoc citreum (strain KM20).